The primary structure comprises 482 residues: tRNA sulfurtransferase (482 aa).

The THUMP domain occupies 61–165 (LAIRDALTRI…DDRLLLIKGR (105 aa)). Residues 183–184 (LI), Lys-265, Gly-287, and Gln-296 each bind ATP. Cys-344 and Cys-456 are joined by a disulfide. Positions 404-482 (FGANDVILDI…GFANVKVYRP (79 aa)) constitute a Rhodanese domain. Cys-456 acts as the Cysteine persulfide intermediate in catalysis.

Belongs to the ThiI family.

The protein localises to the cytoplasm. It catalyses the reaction [ThiI sulfur-carrier protein]-S-sulfanyl-L-cysteine + a uridine in tRNA + 2 reduced [2Fe-2S]-[ferredoxin] + ATP + H(+) = [ThiI sulfur-carrier protein]-L-cysteine + a 4-thiouridine in tRNA + 2 oxidized [2Fe-2S]-[ferredoxin] + AMP + diphosphate. It carries out the reaction [ThiS sulfur-carrier protein]-C-terminal Gly-Gly-AMP + S-sulfanyl-L-cysteinyl-[cysteine desulfurase] + AH2 = [ThiS sulfur-carrier protein]-C-terminal-Gly-aminoethanethioate + L-cysteinyl-[cysteine desulfurase] + A + AMP + 2 H(+). It functions in the pathway cofactor biosynthesis; thiamine diphosphate biosynthesis. Catalyzes the ATP-dependent transfer of a sulfur to tRNA to produce 4-thiouridine in position 8 of tRNAs, which functions as a near-UV photosensor. Also catalyzes the transfer of sulfur to the sulfur carrier protein ThiS, forming ThiS-thiocarboxylate. This is a step in the synthesis of thiazole, in the thiamine biosynthesis pathway. The sulfur is donated as persulfide by IscS. This is tRNA sulfurtransferase from Salmonella agona (strain SL483).